The following is a 258-amino-acid chain: Large ribosomal subunit protein uL5c (258 aa).

The N-terminal 38 residues, 1–38 (MASTSLLQSTSSSFAGVRFHCRTSAAPRVGLSSFTVKA), are a transit peptide targeting the chloroplast.

In terms of assembly, component of the chloroplast large ribosomal subunit (LSU). Mature 70S chloroplast ribosomes of higher plants consist of a small (30S) and a large (50S) subunit. The 30S small subunit contains 1 molecule of ribosomal RNA (16S rRNA) and 24 different proteins. The 50S large subunit contains 3 rRNA molecules (23S, 5S and 4.5S rRNA) and 33 different proteins.

It is found in the plastid. Its subcellular location is the chloroplast. In terms of biological role, component of the chloroplast ribosome (chloro-ribosome), a dedicated translation machinery responsible for the synthesis of chloroplast genome-encoded proteins, including proteins of the transcription and translation machinery and components of the photosynthetic apparatus. The protein is Large ribosomal subunit protein uL5c (RPL5) of Spinacia oleracea (Spinach).